Consider the following 426-residue polypeptide: MIDPQTLRDHPDLVIASQELRGASVEVVDQAVAADSERRRAVTEFEGLRAEQNAHGKLVAKADKADKPRLIAEVQELKARVTAAQERAQEAESALDEAMRRIPNIVIDGVPAGGEDDWALVREVGAKPSFDFAPRDHLEIGEILDAIDMGRGAKVSGARFHYLKGIGARLEIALMNFGLARALEAGLVPLITPTLVKPEIMAGTGFLGAHADEVYHLDDDDLYLTGTSEVALAGYHADEILDLAQGPIRYAGWSTCYRKEAGSYGKDTRGIIRVHQFQKLEMFSYVDPADAEAEHERLLAMQERMMQDLGLSYRVIDTAAGDLGSSAARKYDVEAWIPTQDAYRELTSTSNCTTFQARRLGTRFRGEDGRTSPVATLNGTLATTRWIVAILETHQQADGSVRVPEALRPYLGGLEVLEPAAAKAAR.

Residue 227–229 (TSE) participates in L-serine binding. ATP is bound by residues 258 to 260 (RKE) and Val274. Residue Glu281 participates in L-serine binding. Position 345–348 (345–348 (ELTS)) interacts with ATP. Thr380 provides a ligand contact to L-serine.

Belongs to the class-II aminoacyl-tRNA synthetase family. Type-1 seryl-tRNA synthetase subfamily. As to quaternary structure, homodimer. The tRNA molecule binds across the dimer.

The protein resides in the cytoplasm. The catalysed reaction is tRNA(Ser) + L-serine + ATP = L-seryl-tRNA(Ser) + AMP + diphosphate + H(+). It carries out the reaction tRNA(Sec) + L-serine + ATP = L-seryl-tRNA(Sec) + AMP + diphosphate + H(+). Its pathway is aminoacyl-tRNA biosynthesis; selenocysteinyl-tRNA(Sec) biosynthesis; L-seryl-tRNA(Sec) from L-serine and tRNA(Sec): step 1/1. Functionally, catalyzes the attachment of serine to tRNA(Ser). Is also able to aminoacylate tRNA(Sec) with serine, to form the misacylated tRNA L-seryl-tRNA(Sec), which will be further converted into selenocysteinyl-tRNA(Sec). The sequence is that of Serine--tRNA ligase from Clavibacter michiganensis subsp. michiganensis (strain NCPPB 382).